Reading from the N-terminus, the 183-residue chain is MLFAWAPFPALLGLADSCCFVVPRSEWKALPSECSKGLKKPVRYVVISHTAGSFCSSPDSCEQQARNVQLYQMKQLGWCDVAYNFLIGEDGHVYEGRGWTIKGDHTGPIWNPMSIGITFMGDYSHRVPAKRALRAALNLLKCGVSEGFLRSNYEVKGHRDVQSTLSPGDQLYEIIQSWDHYRE.

An N-terminal signal peptide occupies residues 1 to 17; it reads MLFAWAPFPALLGLADS. Cystine bridges form between Cys18–Cys142, Cys34–Cys79, and Cys55–Cys61. The N-acetylmuramoyl-L-alanine amidase domain maps to 40 to 168; sequence KPVRYVVISH…RDVQSTLSPG (129 aa).

It belongs to the N-acetylmuramoyl-L-alanine amidase 2 family. As to expression, expressed in all regions of the brain.

It localises to the secreted. It is found in the cytoplasmic granule. Its function is as follows. Innate immunity protein that plays several important functions in antimicrobial and antitumor defense systems. Acts as a pattern receptor that binds to murein peptidoglycans (PGN) of Gram-positive bacteria and thus provides bactericidal activity. Forms an equimolar complex with heat shock protein HSPA1A and induces programmed cell death through apoptosis and necroptosis in tumor cell lines by activating the TNFR1 receptor on the target cell membrane. In addition, acts in complex with the Ca(2+)-binding protein S100A4 as a chemoattractant able to induce lymphocyte movement. Mechanistically, this complex acts as a ligand of the chemotactic receptors CCR5 and CXCR3 which are present on the cells of the immune system. Promotes also the activation of lymphocytes that become able to kill virus-infected cells as well as tumor cells by modulating the spectrum of their target-cell specificity. Induction of cytotoxicity on monocyte surface requires interaction with TREM1 receptor. This is Peptidoglycan recognition protein 1 (Pglyrp1) from Rattus norvegicus (Rat).